Reading from the N-terminus, the 352-residue chain is Mannonate dehydratase (352 aa).

The protein belongs to the mannonate dehydratase family. The cofactor is Fe(2+). It depends on Mn(2+) as a cofactor.

The catalysed reaction is D-mannonate = 2-dehydro-3-deoxy-D-gluconate + H2O. It functions in the pathway carbohydrate metabolism; pentose and glucuronate interconversion. Its function is as follows. Catalyzes the dehydration of D-mannonate. The protein is Mannonate dehydratase of Paraburkholderia phytofirmans (strain DSM 17436 / LMG 22146 / PsJN) (Burkholderia phytofirmans).